The primary structure comprises 345 residues: uncharacterized protein (345 aa).

Over residues 1-13 (MSKPNTETISVNI) the composition is skewed to polar residues. The segment at 1-23 (MSKPNTETISVNIPESEGVPLPD) is disordered. Residues 283–316 (SLKQRTNILKKQGETLKKNVEDINKDTSNLKRHA) adopt a coiled-coil conformation.

It localises to the virion. This is an uncharacterized protein from Acanthamoeba polyphaga mimivirus (APMV).